Here is a 245-residue protein sequence, read N- to C-terminus: Glycerophosphodiester phosphodiesterase (245 aa).

Residues 2 to 241 enclose the GP-PDE domain; sequence TKIFAHRGFK…DFPDRAVKIR (240 aa). Catalysis depends on histidine 7, which acts as the Proton acceptor. Glutamate 34 and aspartate 36 together coordinate a divalent metal cation. Histidine 49 acts as the Proton donor in catalysis. Residue glutamate 110 coordinates a divalent metal cation.

The protein belongs to the glycerophosphoryl diester phosphodiesterase family. The cofactor is Ni(2+). Co(2+) serves as cofactor. Requires Mn(2+) as cofactor.

It carries out the reaction a sn-glycero-3-phosphodiester + H2O = an alcohol + sn-glycerol 3-phosphate + H(+). With respect to regulation, inhibited by EDTA and various organic solvents such as chloroform, toluene or benzene. Its function is as follows. Glycerophosphodiester phosphodiesterase hydrolyzes glycerophosphodiesters into glycerol-3-phosphate (G3P) and the corresponding alcohol. Can hydrolyze the model substrate bis-(p-nitrophenyl phosphate) (bis(pNPP)) to p-nitrophenol. Can also catalyze the degradation of diphenyl phosphate (DPHP) to phenyl phosphate (PHP). DPHP is an aryl phosphate ester used as a chemical additive and an industrial catalyst that can easily spread to the environment and exhibits toxicity toward organisms. The protein is Glycerophosphodiester phosphodiesterase of Bacillus altitudinis.